The sequence spans 476 residues: Stromelysin-2 (476 aa).

The first 17 residues, 1–17, serve as a signal peptide directing secretion; sequence MEPLAILVLLCFPICSA. Positions 18–99 are cleaved as a propeptide — activation peptide; it reads YPLHGAVRQD…PRCGVPDVGG (82 aa). The Cysteine switch signature appears at 90–97; that stretch reads PRCGVPDV. Zn(2+)-binding residues include Cys-92, His-168, Asp-170, His-183, His-196, and His-218. Glu-219 is a catalytic residue. Zn(2+)-binding residues include His-222 and His-228. Hemopexin repeat units lie at residues 286 to 335, 336 to 382, 384 to 432, and 433 to 476; these read PVKC…WPSL, PSGL…GFPP, VKKI…FPGI, and EPQV…WLLC. Cys-289 and Cys-476 are joined by a disulfide.

This sequence belongs to the peptidase M10A family. It depends on Zn(2+) as a cofactor. Ca(2+) serves as cofactor.

It localises to the secreted. The protein localises to the extracellular space. Its subcellular location is the extracellular matrix. It catalyses the reaction Similar to stromelysin 1, but action on collagen types III, IV and V is weak.. Functionally, can degrade fibronectin, gelatins of type I, III, IV, and V; weakly collagens III, IV, and V. Activates procollagenase. This chain is Stromelysin-2 (Mmp10), found in Rattus norvegicus (Rat).